The following is a 343-amino-acid chain: F17e-G fimbrial adhesin (343 aa).

A signal peptide spans 1 to 22; that stretch reads MTNFYKVFLAVFILVCCNISHA. Positions 23–199 are receptor-binding lectin domain; it reads AVSFIGSTEN…LNPFTLNDTV (177 aa). A carbohydrate contacts are provided by residues 65-66, 110-111, and 138-141; these read AN, DT, and STQG. A disulfide bond links Cys-75 and Cys-132. Residues 200–343 form a fimbrillin-binding domain region; the sequence is TSCRLLTPSA…GISTFTFSYQ (144 aa). A disordered region spans residues 287–307; that stretch reads LKFGPDSPVKGNENQWQLSTG. Over residues 298–307 the composition is skewed to polar residues; sequence NENQWQLSTG.

This sequence belongs to the fimbrial protein family.

It localises to the fimbrium. Essential fimbrial adhesion factor that mediates binding to N-acetylglucosamine-containing receptors in the host intestinal microvilli, leading to colonization of the intestinal tissue, and diarrhea or septicemia. Also confers adhesiveness to laminin and basement membranes. The protein is F17e-G fimbrial adhesin (f17eG) of Escherichia coli.